The following is a 1038-amino-acid chain: Ubiquitin carboxyl-terminal hydrolase 36 (1038 aa).

Disordered regions lie at residues 22–44 (LGGN…TNGS) and 107–148 (ANGH…PKPK). Polar residues predominate over residues 23–44 (GGNSSAGSSTDQAKSGEDTNGS). A USP domain is found at 172 to 480 (TGMINVGNTC…NAYIMFFELD (309 aa)). The active-site Nucleophile is the C181. Residue H439 is the Proton acceptor of the active site. Disordered regions lie at residues 487–794 (PAAN…SKTG), 818–881 (GSPV…SNGS), 912–985 (LLVD…YNQN), and 1000–1038 (RFGG…QQQT). Low complexity-rich tracts occupy residues 502–517 (STTP…PSPT), 546–559 (QQNQ…LQLG), and 587–606 (NGNK…KSIN). 2 positions are modified to phosphoserine: S513 and S515. The span at 629–641 (TTAQLPSMPNMTE) shows a compositional bias: polar residues. T658 and T662 each carry phosphothreonine. A phosphoserine mark is found at S672 and S674. Residues 703-728 (TNGHSKTNGSHTNGSASSSVHVNNSK) show a composition bias toward polar residues. Positions 729–746 (QKTDAIDEIFKSLKKSAD) are enriched in basic and acidic residues. Position 747 is a phosphoserine (S747). Over residues 747–756 (SDEDDDEEEP) the composition is skewed to acidic residues. The segment covering 766-776 (PQKQSQSQSKA) has biased composition (low complexity). Residues 777 to 786 (PPSPKTPPSP) show a composition bias toward pro residues. S779 is modified (phosphoserine). Phosphothreonine is present on T782. 2 positions are modified to phosphoserine: S785 and S819. T825 carries the post-translational modification Phosphothreonine. Polar residues predominate over residues 832 to 844 (NPFSSSKPSTDSP). Residue S843 is modified to Phosphoserine. T846 is subject to Phosphothreonine. The span at 859-881 (ALKSHQQPRVGNGYQSNATSNGS) shows a compositional bias: polar residues. Residues 912–923 (LLVDAREQRQRD) are compositionally biased toward basic and acidic residues. The span at 942-953 (SGSAKGNNASNS) shows a compositional bias: low complexity.

The protein belongs to the peptidase C19 family. Interacts with atms/PAF1, but not with CycT. Interacts (via C-terminus) with imd (via N-terminus).

The protein resides in the nucleus. Its subcellular location is the nucleolus. It is found in the cytoplasm. The enzyme catalyses Thiol-dependent hydrolysis of ester, thioester, amide, peptide and isopeptide bonds formed by the C-terminal Gly of ubiquitin (a 76-residue protein attached to proteins as an intracellular targeting signal).. Functionally, hydrolase that deubiquitinates polyubiquitinated target proteins including imd. Required for preventing the constitutive activation of the imd/NF-kappa-B (Imd) signaling cascade under unchalleneged conditions. Deubiquitinates imd linked 'Lys-63' chains which leads its proteasomal degradation and consequently down-regulation of the Imd signaling cascade. Removal of the activating 'Lys-63'-linked chains is likely to enable their replacement with 'Lys-48'-linked chains which act as 'tags' the for proteasomal degradation of imd. Required for maintaining multiple types of adult stem cells, including male and female germline, epithelial follicle cell and intestinal stem cells. May function as a transcriptional repressor by continually deubiquiting histone H2B at the promoters of genes critical for cellular differentiation, thereby preventing histone H3 'Lys-4' trimethylation (H3K4me3). Controls selective autophagy activation by ubiquitinated proteins. The sequence is that of Ubiquitin carboxyl-terminal hydrolase 36 (scny) from Drosophila melanogaster (Fruit fly).